A 689-amino-acid polypeptide reads, in one-letter code: DNA ligase (689 aa).

NAD(+) is bound by residues 51-55 (DSEYD), 100-101 (SL), and Glu-129. Lys-131 (N6-AMP-lysine intermediate) is an active-site residue. NAD(+) contacts are provided by Arg-152, Glu-189, Lys-308, and Lys-332. 4 residues coordinate Zn(2+): Cys-426, Cys-429, Cys-444, and Cys-450. Residues 609-689 (ADEQPLKGQT…ELLALLAANS (81 aa)) enclose the BRCT domain.

Belongs to the NAD-dependent DNA ligase family. LigA subfamily. Mg(2+) serves as cofactor. Requires Mn(2+) as cofactor.

It carries out the reaction NAD(+) + (deoxyribonucleotide)n-3'-hydroxyl + 5'-phospho-(deoxyribonucleotide)m = (deoxyribonucleotide)n+m + AMP + beta-nicotinamide D-nucleotide.. Functionally, DNA ligase that catalyzes the formation of phosphodiester linkages between 5'-phosphoryl and 3'-hydroxyl groups in double-stranded DNA using NAD as a coenzyme and as the energy source for the reaction. It is essential for DNA replication and repair of damaged DNA. This is DNA ligase from Shewanella sp. (strain ANA-3).